Consider the following 73-residue polypeptide: Sec-independent protein translocase protein TatA (73 aa).

The chain crosses the membrane as a helical span at residues 1-21 (MGLSWQQLLILLLVVVVIFGT).

Belongs to the TatA/E family. In terms of assembly, the Tat system comprises two distinct complexes: a TatABC complex, containing multiple copies of TatA, TatB and TatC subunits, and a separate TatA complex, containing only TatA subunits. Substrates initially bind to the TatABC complex, which probably triggers association of the separate TatA complex to form the active translocon.

It is found in the cell inner membrane. Its function is as follows. Part of the twin-arginine translocation (Tat) system that transports large folded proteins containing a characteristic twin-arginine motif in their signal peptide across membranes. TatA could form the protein-conducting channel of the Tat system. This chain is Sec-independent protein translocase protein TatA, found in Histophilus somni (strain 129Pt) (Haemophilus somnus).